The following is a 180-amino-acid chain: NAD(P)H-quinone oxidoreductase subunit I, chloroplastic (180 aa).

4Fe-4S ferredoxin-type domains are found at residues 55-84 (GRIH…VHWR) and 95-124 (LNYS…MTEE). 8 residues coordinate [4Fe-4S] cluster: cysteine 64, cysteine 67, cysteine 70, cysteine 74, cysteine 104, cysteine 107, cysteine 110, and cysteine 114.

This sequence belongs to the complex I 23 kDa subunit family. As to quaternary structure, NDH is composed of at least 16 different subunits, 5 of which are encoded in the nucleus. [4Fe-4S] cluster is required as a cofactor.

It localises to the plastid. It is found in the chloroplast thylakoid membrane. The catalysed reaction is a plastoquinone + NADH + (n+1) H(+)(in) = a plastoquinol + NAD(+) + n H(+)(out). The enzyme catalyses a plastoquinone + NADPH + (n+1) H(+)(in) = a plastoquinol + NADP(+) + n H(+)(out). In terms of biological role, NDH shuttles electrons from NAD(P)H:plastoquinone, via FMN and iron-sulfur (Fe-S) centers, to quinones in the photosynthetic chain and possibly in a chloroplast respiratory chain. The immediate electron acceptor for the enzyme in this species is believed to be plastoquinone. Couples the redox reaction to proton translocation, and thus conserves the redox energy in a proton gradient. The sequence is that of NAD(P)H-quinone oxidoreductase subunit I, chloroplastic from Calycanthus floridus var. glaucus (Eastern sweetshrub).